We begin with the raw amino-acid sequence, 542 residues long: Excitatory amino acid transporter 1 (542 aa).

Topologically, residues 1 to 47 are cytoplasmic; that stretch reads MTKSNGEEARLGGRMERFQQGVRKRTLLAKKKVQNITKEDVKSYLFR. A helical transmembrane segment spans residues 48–68; the sequence is NAFVLLTVTAVIVGTILGFTL. Residues 69–86 lie on the Extracellular side of the membrane; sequence RPYRMSYREVKYFSFPGE. Residues 87 to 108 traverse the membrane as a helical segment; that stretch reads LLMRMLQMLVLPLIISSLVTGM. Residues 109-122 lie on the Cytoplasmic side of the membrane; the sequence is AALDSKASGKMGMR. A helical transmembrane segment spans residues 123–145; it reads AVVYYMTTTIIAVVIGIIIVIII. At 146 to 236 the chain is on the extracellular side; the sequence is HPGKGTKENM…ITEELVPVPG (91 aa). A helical transmembrane segment spans residues 237–260; sequence SVNGVNALGLVVFSMCFGFVIGNM. Residues 261 to 269 are Cytoplasmic-facing; sequence KEQGQALRE. A helical transmembrane segment spans residues 270-297; it reads FFDSLNEAIMRLVAVIMWYAPLGILFLI. The Extracellular portion of the chain corresponds to 298–318; the sequence is AGKIVEMEDMGVIGGQLAMYT. The helical transmembrane segment at 319–340 threads the bilayer; that stretch reads VTVIVGLLIHAVIVLPLLYFLV. Topologically, residues 341-345 are cytoplasmic; the sequence is TRKNP. Positions 346–376 form an intramembrane region, discontinuously helical; the sequence is WVFIGGLLQALITALGTSSSSATLPITFKCL. 363-365 provides a ligand contact to L-aspartate; it reads SSS. Residues 377–385 are Cytoplasmic-facing; the sequence is EENNGVDKR. The chain crosses the membrane as a helical span at residues 386–412; the sequence is VTRFVLPVGATINMDGTALYEALAAIF. Na(+) contacts are provided by Gly394, Thr396, and Asn398. Position 402 (Thr402) interacts with L-aspartate. Residues 413 to 425 lie on the Extracellular side of the membrane; that stretch reads IAQVNNFELNFGQ. Residues 426–459 constitute an intramembrane region (discontinuously helical); it reads IITISITATAASIGAAGIPQAGLVTMVIVLTSVG. 443-447 is a binding site for L-aspartate; the sequence is IPQAG. Residues 460 to 472 are Extracellular-facing; that stretch reads LPTDDITLIIAVD. Residues 473–494 form a helical membrane-spanning segment; it reads WFLDRLRTTTNVLGDSLGAGIV. Asp476 and Asn483 together coordinate L-aspartate. The Na(+) site is built by Asn483 and Asp487. The Cytoplasmic portion of the chain corresponds to 495–542; that stretch reads EHLSRHELKNRDVEMGNSVIEENEMKKPYQLISQESEIEKSMDSETKM. Ser512 bears the Phosphoserine mark.

This sequence belongs to the dicarboxylate/amino acid:cation symporter (DAACS) (TC 2.A.23) family. SLC1A3 subfamily. Homotrimer. Post-translationally, glycosylated.

The protein resides in the cell membrane. It carries out the reaction K(+)(in) + L-glutamate(out) + 3 Na(+)(out) + H(+)(out) = K(+)(out) + L-glutamate(in) + 3 Na(+)(in) + H(+)(in). The catalysed reaction is K(+)(in) + L-aspartate(out) + 3 Na(+)(out) + H(+)(out) = K(+)(out) + L-aspartate(in) + 3 Na(+)(in) + H(+)(in). It catalyses the reaction D-aspartate(out) + K(+)(in) + 3 Na(+)(out) + H(+)(out) = D-aspartate(in) + K(+)(out) + 3 Na(+)(in) + H(+)(in). Sodium-dependent, high-affinity amino acid transporter that mediates the uptake of L-glutamate and also L-aspartate and D-aspartate. Functions as a symporter that transports one amino acid molecule together with two or three Na(+) ions and one proton, in parallel with the counter-transport of one K(+) ion. Plays a redundant role in the rapid removal of released glutamate from the synaptic cleft, which is essential for terminating the postsynaptic action of glutamate. The sequence is that of Excitatory amino acid transporter 1 (SLC1A3) from Bos taurus (Bovine).